Consider the following 244-residue polypeptide: NAD(P)H-quinone oxidoreductase subunit K (244 aa).

[4Fe-4S] cluster is bound by residues C60, C61, C125, and C156.

The protein belongs to the complex I 20 kDa subunit family. In terms of assembly, NDH-1 can be composed of about 15 different subunits; different subcomplexes with different compositions have been identified which probably have different functions. [4Fe-4S] cluster is required as a cofactor.

The protein localises to the cellular thylakoid membrane. It catalyses the reaction a plastoquinone + NADH + (n+1) H(+)(in) = a plastoquinol + NAD(+) + n H(+)(out). The enzyme catalyses a plastoquinone + NADPH + (n+1) H(+)(in) = a plastoquinol + NADP(+) + n H(+)(out). In terms of biological role, NDH-1 shuttles electrons from an unknown electron donor, via FMN and iron-sulfur (Fe-S) centers, to quinones in the respiratory and/or the photosynthetic chain. The immediate electron acceptor for the enzyme in this species is believed to be plastoquinone. Couples the redox reaction to proton translocation, and thus conserves the redox energy in a proton gradient. Cyanobacterial NDH-1 also plays a role in inorganic carbon-concentration. This is NAD(P)H-quinone oxidoreductase subunit K from Synechococcus sp. (strain CC9902).